We begin with the raw amino-acid sequence, 499 residues long: Membrane-associated tyrosine- and threonine-specific cdc2-inhibitory kinase (499 aa).

Methionine 1 is modified (N-acetylmethionine). Residues 1-29 (MLERPPALAMPMPTEGTPPPLSGTPIPVP) form a disordered region. Residues 16-28 (GTPPPLSGTPIPV) show a composition bias toward pro residues. Position 17 is a phosphothreonine (threonine 17). Position 40 is a phosphoserine (serine 40). Residues 42-72 (KRPRGLSRSLPPPPPAKGSIPISRLFPPRTP) form a disordered region. Phosphoserine occurs at positions 94 and 120. One can recognise a Protein kinase domain in the interval 110–359 (FQRLSRLGHG…AEALLALPVL (250 aa)). ATP-binding positions include 116 to 124 (LGHGSYGEV) and lysine 139. Phosphoserine is present on residues serine 143 and serine 160. The Proton acceptor role is filled by aspartate 233. Mg(2+)-binding residues include asparagine 238, aspartate 251, and glycine 253. The Membrane-association motif motif lies at 382 to 398 (LWQALLALLCWLWHGLA). Residues 398-499 (AHPASWLQPL…SLFEDTLDPT (102 aa)) form an interaction with PIN1 region. Position 426 is a phosphoserine; by PLK1 (serine 426). Positions 437–499 (GPSLSPEAVL…SLFEDTLDPT (63 aa)) are interaction with CDC2-CCNB1. The disordered stretch occupies residues 451–485 (GSTSTPRSRCTPRDALDLSDINSEPPRGSFPSFEP). Residues serine 469, serine 473, and serine 482 each carry the phosphoserine modification. Threonine 495 is subject to Phosphothreonine; by PLK1.

This sequence belongs to the protein kinase superfamily. Ser/Thr protein kinase family. WEE1 subfamily. Interacts with CDC2-CCNB1 complex. Can also interact with PIN1 when phosphorylated by CDC2-CCNB1. Autophosphorylated. Phosphorylated by CDC2-CCNB1 complexes on undefined serine and threonine residues. The phosphorylation by CDC2-CCNB1 complexes may inhibit the catalytic activity.

It localises to the endoplasmic reticulum membrane. The protein localises to the golgi apparatus membrane. It carries out the reaction L-seryl-[protein] + ATP = O-phospho-L-seryl-[protein] + ADP + H(+). The enzyme catalyses L-threonyl-[protein] + ATP = O-phospho-L-threonyl-[protein] + ADP + H(+). Its activity is regulated as follows. Negatively regulated by hyperphosphorylation during mitosis. The hyperphosphorylated form does not associate with CCNB1-CDC2 complexes. The PLK1 protein kinase may be required for mitotic phosphorylation. In terms of biological role, acts as a negative regulator of entry into mitosis (G2 to M transition) by phosphorylation of the CDK1 kinase specifically when CDK1 is complexed to cyclins. Mediates phosphorylation of CDK1 predominantly on 'Thr-14'. Also involved in Golgi fragmentation. May be involved in phosphorylation of CDK1 on 'Tyr-15' to a lesser degree, however tyrosine kinase activity is unclear and may be indirect. The sequence is that of Membrane-associated tyrosine- and threonine-specific cdc2-inhibitory kinase (PKMYT1) from Homo sapiens (Human).